Consider the following 854-residue polypeptide: Nucleolar MIF4G domain-containing protein 1 homolog (854 aa).

Disordered regions lie at residues Met1–Lys38, Gln55–Val105, Pro120–Ile161, and Arg217–Glu306. Residues Thr15 to Lys28 are compositionally biased toward basic and acidic residues. The segment covering Lys60–Lys71 has biased composition (basic residues). Residues Ile88 to Val105 show a composition bias toward acidic residues. Basic and acidic residues-rich tracts occupy residues Arg135–Ser156 and Arg217–Ala238. Positions Ser242 to Glu289 are enriched in acidic residues. The segment covering Asn290–Glu306 has biased composition (basic and acidic residues). An MIF4G domain is found at Leu352 to Asn553. One can recognise an MI domain in the interval Ala650–Phe764.

Belongs to the CWC22 family.

The protein localises to the nucleus. Its subcellular location is the nucleolus. In Drosophila melanogaster (Fruit fly), this protein is Nucleolar MIF4G domain-containing protein 1 homolog.